We begin with the raw amino-acid sequence, 830 residues long: Ent-cassa-12,15-diene synthase (830 aa).

The segment at 1 to 50 (MMLLGSPSSGGYGGKFAGASPAGGTTTMAPSAKQPSSRAPPPGITGGRND) is disordered. Residues 23-37 (GGTTTMAPSAKQPSS) are compositionally biased toward polar residues. Positions 577, 581, 721, and 729 each coordinate Mg(2+). A DDXXD motif motif is present at residues 577 to 581 (DDLFD).

The protein belongs to the terpene synthase family. Requires Mg(2+) as cofactor. As to expression, expressed in roots and stems.

It carries out the reaction ent-copalyl diphosphate = ent-cassa-12,15-diene + diphosphate. Functionally, involved in phytocassane phytoalexins biosynthesis. Catalyzes the conversion of ent-copalyl diphosphate to the phytoalexin precursor ent-cassa-12,15-diene. This chain is Ent-cassa-12,15-diene synthase (KSL7), found in Oryza sativa subsp. indica (Rice).